A 211-amino-acid chain; its full sequence is Adenylate kinase (211 aa).

10–15 lines the ATP pocket; that stretch reads GSGKGT. The segment at 30-59 is NMP; sequence STGDLFRENILNSTTLGKEIKKIVEKGELV. Residues Thr-31, Arg-36, 57–59, 85–88, and Gln-92 contribute to the AMP site; these read ELV and GFPR. Residues 121 to 158 are LID; the sequence is GRRICKSCNNIFNIYTLATKKNGICDVCKGDLYQREDD. Arg-122 contributes to the ATP binding site. Zn(2+)-binding residues include Cys-125 and Cys-128. An ATP-binding site is contributed by 131-132; it reads IF. 2 residues coordinate Zn(2+): Cys-145 and Cys-148. Arg-155 and Arg-166 together coordinate AMP. Val-194 contacts ATP.

This sequence belongs to the adenylate kinase family. Monomer.

The protein localises to the cytoplasm. It catalyses the reaction AMP + ATP = 2 ADP. The protein operates within purine metabolism; AMP biosynthesis via salvage pathway; AMP from ADP: step 1/1. Catalyzes the reversible transfer of the terminal phosphate group between ATP and AMP. Plays an important role in cellular energy homeostasis and in adenine nucleotide metabolism. This Borrelia garinii subsp. bavariensis (strain ATCC BAA-2496 / DSM 23469 / PBi) (Borreliella bavariensis) protein is Adenylate kinase.